Consider the following 398-residue polypeptide: NADH-quinone oxidoreductase subunit D (398 aa).

Belongs to the complex I 49 kDa subunit family. In terms of assembly, NDH-1 is composed of 14 different subunits. Subunits NuoB, C, D, E, F, and G constitute the peripheral sector of the complex.

The protein resides in the cell inner membrane. The catalysed reaction is a quinone + NADH + 5 H(+)(in) = a quinol + NAD(+) + 4 H(+)(out). Functionally, NDH-1 shuttles electrons from NADH, via FMN and iron-sulfur (Fe-S) centers, to quinones in the respiratory chain. The immediate electron acceptor for the enzyme in this species is believed to be ubiquinone. Couples the redox reaction to proton translocation (for every two electrons transferred, four hydrogen ions are translocated across the cytoplasmic membrane), and thus conserves the redox energy in a proton gradient. This is NADH-quinone oxidoreductase subunit D from Rhodospirillum centenum (strain ATCC 51521 / SW).